Consider the following 235-residue polypeptide: Octanoyltransferase (235 aa).

The 185-residue stretch at 30–214 folds into the BPL/LPL catalytic domain; that stretch reads NELEDTLLLL…YFGKVFGAKF (185 aa). Substrate is bound by residues 75 to 82, 144 to 146, and 157 to 159; these read RGGDVTYH, AIG, and GFA. Cys-175 (acyl-thioester intermediate) is an active-site residue.

Belongs to the LipB family.

It is found in the cytoplasm. It catalyses the reaction octanoyl-[ACP] + L-lysyl-[protein] = N(6)-octanoyl-L-lysyl-[protein] + holo-[ACP] + H(+). Its pathway is protein modification; protein lipoylation via endogenous pathway; protein N(6)-(lipoyl)lysine from octanoyl-[acyl-carrier-protein]: step 1/2. Catalyzes the transfer of endogenously produced octanoic acid from octanoyl-acyl-carrier-protein onto the lipoyl domains of lipoate-dependent enzymes. Lipoyl-ACP can also act as a substrate although octanoyl-ACP is likely to be the physiological substrate. The chain is Octanoyltransferase from Caldicellulosiruptor saccharolyticus (strain ATCC 43494 / DSM 8903 / Tp8T 6331).